A 270-amino-acid chain; its full sequence is Tetracenomycin polyketide synthesis O-methyltransferase TcmP (270 aa).

The protein operates within antibiotic biosynthesis; tetracenomycin C biosynthesis. O-methyltransferase that catalyzes the methylation of the C-9 carboxy group of tetracenomycin E (TCM E) to yield TCM A2. Catalyzes as well the following side reactions: methylation of 8-O-methyl-TCM D3 to 9-carboxymethyl-8-O-methyl-TCM D3; and of TCM B3 to 9-carboxymethyl-TCM B3. This chain is Tetracenomycin polyketide synthesis O-methyltransferase TcmP (tcmP), found in Streptomyces glaucescens.